A 249-amino-acid chain; its full sequence is 3-deoxy-manno-octulosonate cytidylyltransferase (249 aa).

It belongs to the KdsB family.

It localises to the cytoplasm. The enzyme catalyses 3-deoxy-alpha-D-manno-oct-2-ulosonate + CTP = CMP-3-deoxy-beta-D-manno-octulosonate + diphosphate. It functions in the pathway nucleotide-sugar biosynthesis; CMP-3-deoxy-D-manno-octulosonate biosynthesis; CMP-3-deoxy-D-manno-octulosonate from 3-deoxy-D-manno-octulosonate and CTP: step 1/1. Its pathway is bacterial outer membrane biogenesis; lipopolysaccharide biosynthesis. In terms of biological role, activates KDO (a required 8-carbon sugar) for incorporation into bacterial lipopolysaccharide in Gram-negative bacteria. This Coxiella burnetii (strain CbuG_Q212) (Coxiella burnetii (strain Q212)) protein is 3-deoxy-manno-octulosonate cytidylyltransferase.